Consider the following 247-residue polypeptide: Carboxy-S-adenosyl-L-methionine synthase (247 aa).

S-adenosyl-L-methionine contacts are provided by residues tyrosine 40, 65–67, 90–91, 122–123, asparagine 137, and arginine 204; these read GAS, DN, and DI.

The protein belongs to the class I-like SAM-binding methyltransferase superfamily. Cx-SAM synthase family. As to quaternary structure, homodimer.

It catalyses the reaction prephenate + S-adenosyl-L-methionine = carboxy-S-adenosyl-L-methionine + 3-phenylpyruvate + H2O. Functionally, catalyzes the conversion of S-adenosyl-L-methionine (SAM) to carboxy-S-adenosyl-L-methionine (Cx-SAM). This is Carboxy-S-adenosyl-L-methionine synthase from Pseudomonas putida (strain GB-1).